An 82-amino-acid chain; its full sequence is Small ribosomal subunit protein eS17 (82 aa).

It belongs to the eukaryotic ribosomal protein eS17 family.

In Sulfolobus acidocaldarius (strain ATCC 33909 / DSM 639 / JCM 8929 / NBRC 15157 / NCIMB 11770), this protein is Small ribosomal subunit protein eS17.